The chain runs to 259 residues: Oxidase ustYb (259 aa).

The chain crosses the membrane as a helical span at residues 36–56; the sequence is IIYTSLAFVGFIEILFFGIFF. 2 N-linked (GlcNAc...) asparagine glycosylation sites follow: asparagine 102 and asparagine 122. 2 short sequence motifs (HXXHC) span residues 147-151 and 197-201; these read HQLHC and HVDHC.

Belongs to the ustYa family.

Its subcellular location is the membrane. Its pathway is mycotoxin biosynthesis. In terms of biological role, oxidase; part of the gene cluster that mediates the biosynthesis of the secondary metabolite ustiloxin B, an antimitotic tetrapeptide. First, ustA is processed by the subtilisin-like endoprotease Kex2 that is outside the ustiloxin B gene cluster, at the C-terminal side of Arg-Lys, after transfer to Golgi apparatus through the endoplasmic reticulum (ER). Cleavage by KEX2 generates 16 peptides YAIG-I to YAIG-XVI. To process the precursor peptide further, at least two peptidases are necessary to cleave the N-terminal and C-terminal sides of the Tyr-Ala-Ile-Gly core peptide which serves as backbone for the synthesis of ustiloxin B, through cyclization and modification of the tyrosine with a non-protein coding amino acid, norvaline. One of the two peptidases must be the serine peptidase ustP; and the other pepdidase is probably ustH. Macrocyclization of the core peptide derived from ustA requires the tyrosinase ustQ, as well as the homologous oxidases ustYa and ustYb, and leads to the production of the first cyclization product N-desmethylustiloxin F. For the formation of N-desmethylustiloxin F, three oxidation steps are required, hydroxylation at the benzylic position, hydroxylation at either the aromatic ring of Tyr or beta-position of Ile, and oxidative cyclization. UstQ may catalyze the oxidation of a phenol moiety, whereas the ustYa and ustYb are most likely responsible for the remaining two-step oxidations. N-desmethylustiloxin F is then methylated by ustM to yield ustiloxin F which in turn substrate of the cytochrome P450 monooxygenase ustC which catalyzes the formation of S-deoxyustiloxin H. The flavoprotein monooxygenases ustF1 and ustF2 then participate in the modification of the side chain of S-deoxyustiloxin H, leading to the synthesis of an oxime intermediate, via ustiloxin H. Finally, carboxylative dehydration performed by the cysteine desulfurase-like protein ustD yields ustiloxin B. This chain is Oxidase ustYb, found in Aspergillus flavus (strain ATCC 200026 / FGSC A1120 / IAM 13836 / NRRL 3357 / JCM 12722 / SRRC 167).